The sequence spans 144 residues: 3-hydroxyacyl-[acyl-carrier-protein] dehydratase FabZ (144 aa).

His48 is an active-site residue.

This sequence belongs to the thioester dehydratase family. FabZ subfamily.

The protein resides in the cytoplasm. It carries out the reaction a (3R)-hydroxyacyl-[ACP] = a (2E)-enoyl-[ACP] + H2O. Functionally, involved in unsaturated fatty acids biosynthesis. Catalyzes the dehydration of short chain beta-hydroxyacyl-ACPs and long chain saturated and unsaturated beta-hydroxyacyl-ACPs. The polypeptide is 3-hydroxyacyl-[acyl-carrier-protein] dehydratase FabZ (Bacillus cytotoxicus (strain DSM 22905 / CIP 110041 / 391-98 / NVH 391-98)).